The sequence spans 150 residues: Ventricular natriuretic peptide (150 aa).

An N-terminal signal peptide occupies residues 1 to 21 (MAKSGIYLGCFILILIQNMVA). Residues 52–75 (EEPEVYPESEDMKMDAEEEDAGIS) are disordered. A disulfide bond links cysteine 120 and cysteine 136.

Belongs to the natriuretic peptide family. Heart ventricle, and to a lower extent in heart atrium.

The protein localises to the secreted. Its function is as follows. Exhibits natriuretic and vasodepressor activity. This chain is Ventricular natriuretic peptide (vnp), found in Anguilla japonica (Japanese eel).